Here is a 437-residue protein sequence, read N- to C-terminus: Glutamyl-tRNA reductase (437 aa).

Substrate is bound by residues Thr49 to Arg52, Ser109, Glu114 to Gln116, and Gln120. Catalysis depends on Cys50, which acts as the Nucleophile. Position 189–194 (Gly189–Ser194) interacts with NADP(+).

Belongs to the glutamyl-tRNA reductase family. In terms of assembly, homodimer.

It carries out the reaction (S)-4-amino-5-oxopentanoate + tRNA(Glu) + NADP(+) = L-glutamyl-tRNA(Glu) + NADPH + H(+). Its pathway is porphyrin-containing compound metabolism; protoporphyrin-IX biosynthesis; 5-aminolevulinate from L-glutamyl-tRNA(Glu): step 1/2. Catalyzes the NADPH-dependent reduction of glutamyl-tRNA(Glu) to glutamate 1-semialdehyde (GSA). This is Glutamyl-tRNA reductase from Paenibacillus macerans (Bacillus macerans).